The following is a 223-amino-acid chain: Transcriptional regulatory protein HprR (223 aa).

The 114-residue stretch at 2-115 (KILLIEDNQR…ELLARVRAQL (114 aa)) folds into the Response regulatory domain. The residue at position 51 (Asp-51) is a 4-aspartylphosphate. The segment at residues 122-220 (NSTLEISGLR…IRGMGYSFVA (99 aa)) is a DNA-binding region (ompR/PhoB-type).

Phosphorylated by HprS.

The protein resides in the cytoplasm. Its function is as follows. Member of a two-component regulatory system HprR/HprS involved in response to hydrogen peroxide. Regulates the expression of at least 5 operons, cyoABCDE, hprRS, hiuH, cusRS and cusCFBA. Bifunctional regulator that acts as an activator and a repressor. This is Transcriptional regulatory protein HprR from Escherichia coli (strain K12).